The primary structure comprises 225 residues: 3-dehydroquinate dehydratase (225 aa).

Residues glutamate 30–arginine 32 and arginine 62 contribute to the 3-dehydroquinate site. The Proton donor/acceptor role is filled by histidine 118. Residue lysine 143 is the Schiff-base intermediate with substrate of the active site. 3-dehydroquinate-binding residues include arginine 186, serine 205, and glutamine 209.

This sequence belongs to the type-I 3-dehydroquinase family. As to quaternary structure, homodimer.

It catalyses the reaction 3-dehydroquinate = 3-dehydroshikimate + H2O. It participates in metabolic intermediate biosynthesis; chorismate biosynthesis; chorismate from D-erythrose 4-phosphate and phosphoenolpyruvate: step 3/7. In terms of biological role, involved in the third step of the chorismate pathway, which leads to the biosynthesis of aromatic amino acids. Catalyzes the cis-dehydration of 3-dehydroquinate (DHQ) and introduces the first double bond of the aromatic ring to yield 3-dehydroshikimate. This chain is 3-dehydroquinate dehydratase, found in Streptococcus mutans serotype c (strain ATCC 700610 / UA159).